The following is a 162-amino-acid chain: uncharacterized protein (162 aa).

This sequence belongs to the A.longa ORF167/ORF288 family.

The protein resides in the plastid. This is an uncharacterized protein from Euglena longa (Euglenophycean alga).